A 327-amino-acid polypeptide reads, in one-letter code: Tagatose 1,6-diphosphate aldolase 2 (327 aa).

The protein belongs to the aldolase LacD family.

The enzyme catalyses D-tagatofuranose 1,6-bisphosphate = D-glyceraldehyde 3-phosphate + dihydroxyacetone phosphate. It participates in carbohydrate metabolism; D-tagatose 6-phosphate degradation; D-glyceraldehyde 3-phosphate and glycerone phosphate from D-tagatose 6-phosphate: step 2/2. The chain is Tagatose 1,6-diphosphate aldolase 2 from Streptococcus pyogenes serotype M6 (strain ATCC BAA-946 / MGAS10394).